The following is a 336-amino-acid chain: Flavonoid 6-O-methyltransferase 4 (336 aa).

S-adenosyl-L-methionine is bound by residues Tyr-140 and Asp-203. His-241 serves as the catalytic Proton acceptor.

Belongs to the class I-like SAM-binding methyltransferase superfamily. Cation-independent O-methyltransferase family. Homodimer. Expressed in leaves.

It catalyses the reaction ladanein + S-adenosyl-L-methionine = salvigenin + S-adenosyl-L-homocysteine + H(+). It carries out the reaction scutellarein 7-methyl ether + S-adenosyl-L-methionine = cirsimaritin + S-adenosyl-L-homocysteine + H(+). It functions in the pathway flavonoid metabolism. In terms of biological role, flavonoid 6-O-methyltransferase involved in the biosynthesis of polymethoxylated flavonoids natural products such as nevadensin and salvigenin (SALV), aroma compounds which contribute to the flavor of sweet basil, and exhibit pharmacological activities such as anti-allergic, anti-oxidant, antibacterial, anti-proliferative, and anti-inflammatory effects. Catalyzes S-adenosylmethionine-dependent regioselective 6-O-methylation of flavonoids; active on various hydroxylated flavonoid substrates, including scutellarein-7-methyl ether (SCU7Me) and ladanein (LAD). The polypeptide is Flavonoid 6-O-methyltransferase 4 (Ocimum basilicum (Sweet basil)).